We begin with the raw amino-acid sequence, 380 residues long: Protein phosphatase methylesterase 1 (380 aa).

The disordered stretch occupies residues 1–38 (MSALEKSMHLGRLPSRPPLPGSGGSQSGAKMRMGPGRK). S15 is subject to Phosphoserine. R16 bears the Asymmetric dimethylarginine; alternate mark. Position 16 is an omega-N-methylarginine; alternate (R16). S42 carries the phosphoserine modification. Active-site residues include S156 and D181. Residues 255–265 (IEEEEEDEEGS) show a composition bias toward acidic residues. The interval 255 to 280 (IEEEEEDEEGSESVNKRKKEDDMETK) is disordered. The span at 268–280 (VNKRKKEDDMETK) shows a compositional bias: basic and acidic residues. H349 is an active-site residue.

Belongs to the AB hydrolase superfamily. In terms of assembly, binds PPP2CA and PPP2CB. Phosphorylated by SIK1 following increases in intracellular sodium, leading to dissociation from the protein phosphatase 2A (PP2A) complex and subsequent dephosphorylation of sodium/potassium-transporting ATPase ATP1A1.

It carries out the reaction [phosphatase 2A protein]-C-terminal L-leucine methyl ester + H2O = [phosphatase 2A protein]-C-terminal L-leucine + methanol + H(+). In terms of biological role, demethylates proteins that have been reversibly carboxymethylated. Demethylates PPP2CB (in vitro) and PPP2CA. Binding to PPP2CA displaces the manganese ion and inactivates the enzyme. The sequence is that of Protein phosphatase methylesterase 1 (PPME1) from Bos taurus (Bovine).